Consider the following 591-residue polypeptide: MFKKNINIKIKTKILNLRKKIEMWNNNYYVKNLSLVSDEKYDSTLFELNELEKKYSMFLNTSYSNKIVAKNICNKFKKIKHLSNMLSLESIFNYKNLLNFHEKVKKNLFYNEKRYYCCELKIDGLAINLIYKNGILDSASTRGDGLQGEDVTKNALEIKSIPHILKKNNLSFPKKIEIRGEVFIKLSTFNKINKMLKSKRKKLFSNARNMASGSLRQINPKITKNRSLSFYGYGIGYVNEKKYYYDQHDALKLINSWGIPIEKNTELCKSLNEVKNFYEKSIKIRDYLDFNIDGIVVKVNSMKLQKKLGCSSKYPRWAIAYKFSSEEKCTKILGVNFNVGRTGVITPVAKLKPVYFMGTIIKYSSLHNKDIIDKLGIMINDTVCLKKSGDVIPKISRVIFEKRKNVKEIIFPKTCIFCKSKIEFCLRKKNLYCTGGFLCYAQRKQLLNHFVSREALNIKGMGNKIISQLIEKKIIKYPSDIFKLNTDKIIFLKGMGLKSSENLIKEIIKSKTTELYRVIYGIGIPNVGIYTSMNLANYYKNISNFINTSYEDLRSIKGIGSFTSNCIKKFLKDKRNISIISDLLNVNLKIK.

NAD(+) contacts are provided by residues 38–42 (DEKYD), 87–88 (SL), and Glu119. Lys121 serves as the catalytic N6-AMP-lysine intermediate. 4 residues coordinate NAD(+): Arg142, Glu181, Lys298, and Lys322. 4 residues coordinate Zn(2+): Cys415, Cys418, Cys433, and Cys439.

This sequence belongs to the NAD-dependent DNA ligase family. LigA subfamily. Mg(2+) is required as a cofactor. The cofactor is Mn(2+).

The catalysed reaction is NAD(+) + (deoxyribonucleotide)n-3'-hydroxyl + 5'-phospho-(deoxyribonucleotide)m = (deoxyribonucleotide)n+m + AMP + beta-nicotinamide D-nucleotide.. DNA ligase that catalyzes the formation of phosphodiester linkages between 5'-phosphoryl and 3'-hydroxyl groups in double-stranded DNA using NAD as a coenzyme and as the energy source for the reaction. It is essential for DNA replication and repair of damaged DNA. In Wigglesworthia glossinidia brevipalpis, this protein is DNA ligase.